Consider the following 91-residue polypeptide: DNA-directed RNA polymerase subunit omega (91 aa).

This sequence belongs to the RNA polymerase subunit omega family. The RNAP catalytic core consists of 2 alpha, 1 beta, 1 beta' and 1 omega subunit. When a sigma factor is associated with the core the holoenzyme is formed, which can initiate transcription.

It catalyses the reaction RNA(n) + a ribonucleoside 5'-triphosphate = RNA(n+1) + diphosphate. In terms of biological role, promotes RNA polymerase assembly. Latches the N- and C-terminal regions of the beta' subunit thereby facilitating its interaction with the beta and alpha subunits. The protein is DNA-directed RNA polymerase subunit omega of Pectobacterium atrosepticum (strain SCRI 1043 / ATCC BAA-672) (Erwinia carotovora subsp. atroseptica).